The chain runs to 502 residues: 1-aminocyclopropane-1-carboxylate synthase-like protein 1 (502 aa).

The disordered stretch occupies residues 1–24; sequence MFCLPQQESTAPTTCTGSASTQDM. Glu-106 contributes to the substrate binding site. Residue Lys-324 is modified to N6-(pyridoxal phosphate)lysine.

It belongs to the class-I pyridoxal-phosphate-dependent aminotransferase family.

In terms of biological role, does not catalyze the synthesis of 1-aminocyclopropane-1-carboxylate but is capable of catalyzing the deamination of L-vinylglycine. The chain is 1-aminocyclopropane-1-carboxylate synthase-like protein 1 (Accs) from Mus musculus (Mouse).